We begin with the raw amino-acid sequence, 277 residues long: Pantothenate synthetase (277 aa).

26–33 (MGNLHEGH) contributes to the ATP binding site. Histidine 33 serves as the catalytic Proton donor. Glutamine 57 provides a ligand contact to (R)-pantoate. A beta-alanine-binding site is contributed by glutamine 57. 144–147 (GKKD) is a binding site for ATP. Glutamine 150 serves as a coordination point for (R)-pantoate. ATP contacts are provided by residues glycine 173 and 181 to 184 (LSSR).

It belongs to the pantothenate synthetase family. In terms of assembly, homodimer.

It localises to the cytoplasm. The enzyme catalyses (R)-pantoate + beta-alanine + ATP = (R)-pantothenate + AMP + diphosphate + H(+). It functions in the pathway cofactor biosynthesis; (R)-pantothenate biosynthesis; (R)-pantothenate from (R)-pantoate and beta-alanine: step 1/1. Catalyzes the condensation of pantoate with beta-alanine in an ATP-dependent reaction via a pantoyl-adenylate intermediate. This is Pantothenate synthetase from Chromobacterium violaceum (strain ATCC 12472 / DSM 30191 / JCM 1249 / CCUG 213 / NBRC 12614 / NCIMB 9131 / NCTC 9757 / MK).